Here is a 426-residue protein sequence, read N- to C-terminus: Phosphoribosylamine--glycine ligase (426 aa).

Residues 109-312 (KEVMEAAGVA…LAGVLNAVAT (204 aa)) enclose the ATP-grasp domain. ATP is bound at residue 138–193 (LDYFGPMYVVKDDGLAAGKGVVVTADRAEARQHIHLVHAAGNPVLLESFLDGPEVS). Glutamate 282 and asparagine 284 together coordinate Mg(2+).

Belongs to the GARS family. The cofactor is Mg(2+). It depends on Mn(2+) as a cofactor.

It carries out the reaction 5-phospho-beta-D-ribosylamine + glycine + ATP = N(1)-(5-phospho-beta-D-ribosyl)glycinamide + ADP + phosphate + H(+). It participates in purine metabolism; IMP biosynthesis via de novo pathway; N(1)-(5-phospho-D-ribosyl)glycinamide from 5-phospho-alpha-D-ribose 1-diphosphate: step 2/2. The protein is Phosphoribosylamine--glycine ligase of Corynebacterium ammoniagenes (Brevibacterium ammoniagenes).